The sequence spans 562 residues: Protein FAM222B (562 aa).

Composition is skewed to low complexity over residues 147–167 (PQAQ…LAHA) and 183–201 (ALSH…HPQQ). 2 disordered regions span residues 147–242 (PQAQ…PPNV) and 537–562 (AHRA…PGYR).

Belongs to the FAM222 family.

The sequence is that of Protein FAM222B (Fam222b) from Mus musculus (Mouse).